Here is a 191-residue protein sequence, read N- to C-terminus: Ribosome maturation factor RimM (191 aa).

The 78-residue stretch at 107 to 184 folds into the PRC barrel domain; the sequence is EDDEWHQDDL…LVLVSPPPGL (78 aa).

Belongs to the RimM family. Binds ribosomal protein uS19.

The protein localises to the cytoplasm. Its function is as follows. An accessory protein needed during the final step in the assembly of 30S ribosomal subunit, possibly for assembly of the head region. Essential for efficient processing of 16S rRNA. May be needed both before and after RbfA during the maturation of 16S rRNA. It has affinity for free ribosomal 30S subunits but not for 70S ribosomes. This is Ribosome maturation factor RimM from Kocuria rhizophila (strain ATCC 9341 / DSM 348 / NBRC 103217 / DC2201).